Consider the following 150-residue polypeptide: Myeloid-derived growth factor homolog (150 aa).

The N-terminal stretch at M1 to S22 is a signal peptide.

This sequence belongs to the MYDGF family.

It localises to the secreted. The chain is Myeloid-derived growth factor homolog from Dictyostelium discoideum (Social amoeba).